A 462-amino-acid chain; its full sequence is Chromosomal replication initiator protein DnaA (462 aa).

The interval 1–83 is domain I, interacts with DnaA modulators; the sequence is MSLSLWQQCL…LRFEVGSKPA (83 aa). The domain II stretch occupies residues 83–125; that stretch reads AVRAHSHPVTASVSAPVAPVTRSAPVRPSWDSSPAQPELSYRS. Residues 105 to 127 are disordered; the sequence is SAPVRPSWDSSPAQPELSYRSNV. Positions 112-127 are enriched in polar residues; it reads WDSSPAQPELSYRSNV. The interval 126–342 is domain III, AAA+ region; that stretch reads NVNPKHTFDN…GALNRVIANA (217 aa). Positions 170, 172, 173, and 174 each coordinate ATP. Positions 343-462 are domain IV, binds dsDNA; it reads NFTGRAITID…FSNLIRTLSS (120 aa).

This sequence belongs to the DnaA family. Oligomerizes as a right-handed, spiral filament on DNA at oriC.

Its subcellular location is the cytoplasm. In terms of biological role, plays an essential role in the initiation and regulation of chromosomal replication. ATP-DnaA binds to the origin of replication (oriC) to initiate formation of the DNA replication initiation complex once per cell cycle. Binds the DnaA box (a 9 base pair repeat at the origin) and separates the double-stranded (ds)DNA. Forms a right-handed helical filament on oriC DNA; dsDNA binds to the exterior of the filament while single-stranded (ss)DNA is stabiized in the filament's interior. The ATP-DnaA-oriC complex binds and stabilizes one strand of the AT-rich DNA unwinding element (DUE), permitting loading of DNA polymerase. After initiation quickly degrades to an ADP-DnaA complex that is not apt for DNA replication. Binds acidic phospholipids. The protein is Chromosomal replication initiator protein DnaA of Yersinia enterocolitica serotype O:8 / biotype 1B (strain NCTC 13174 / 8081).